Here is a 74-residue protein sequence, read N- to C-terminus: Cecropin-P4 (74 aa).

A signal peptide spans 1–13 (MFLMYLLVQTTES). A propeptide spans 45–74 (HRRSVAHQEEASLHVKTDELPSPDTVREQL) (removed in mature form). The interval 51-74 (HQEEASLHVKTDELPSPDTVREQL) is disordered.

It belongs to the cecropin family. As to expression, expressed in the body wall, intestine, uterus and ovary.

It is found in the secreted. Its function is as follows. Has antibacterial activity against several Gram-positive and Gram-negative bacteria. Is weakly active against yeasts. Acts by a nonpore mechanism. The chain is Cecropin-P4 (ASCEC-4) from Ascaris suum (Pig roundworm).